Consider the following 537-residue polypeptide: ATP synthase subunit beta 1 (537 aa).

164-171 (GGAGVGKT) serves as a coordination point for ATP. Positions 471 to 537 (PKQSATEKNS…ESLEEPQNGR (67 aa)) are disordered. 2 stretches are compositionally biased toward polar residues: residues 473-498 (QSAT…SPGP) and 507-528 (IPSS…AQNE).

Belongs to the ATPase alpha/beta chains family. F-type ATPases have 2 components, CF(1) - the catalytic core - and CF(0) - the membrane proton channel. CF(1) has five subunits: alpha(3), beta(3), gamma(1), delta(1), epsilon(1). CF(0) has three main subunits: a(1), b(2) and c(9-12). The alpha and beta chains form an alternating ring which encloses part of the gamma chain. CF(1) is attached to CF(0) by a central stalk formed by the gamma and epsilon chains, while a peripheral stalk is formed by the delta and b chains.

Its subcellular location is the cell inner membrane. The enzyme catalyses ATP + H2O + 4 H(+)(in) = ADP + phosphate + 5 H(+)(out). In terms of biological role, produces ATP from ADP in the presence of a proton gradient across the membrane. The catalytic sites are hosted primarily by the beta subunits. The chain is ATP synthase subunit beta 1 from Pseudoalteromonas atlantica (strain T6c / ATCC BAA-1087).